Reading from the N-terminus, the 85-residue chain is Small ribosomal subunit protein uS17 (85 aa).

This sequence belongs to the universal ribosomal protein uS17 family. As to quaternary structure, part of the 30S ribosomal subunit.

In terms of biological role, one of the primary rRNA binding proteins, it binds specifically to the 5'-end of 16S ribosomal RNA. In Ruminiclostridium cellulolyticum (strain ATCC 35319 / DSM 5812 / JCM 6584 / H10) (Clostridium cellulolyticum), this protein is Small ribosomal subunit protein uS17.